Reading from the N-terminus, the 796-residue chain is MKHKLDVTINELRLKSIRKIVKRINTWGDEVKSYSDDALKQKTIEFKERLASGVDTLDTLLPEAYAVAREASWRVLGMYPKEVQLIGAIVLHEGNIAEMQTGEGKTLTATMPLYLNALSGKGTYLITTNDYLAKRDFEEMQPLYEWLGLTASLGFVDIVDYEYQKGEKRNLYEHDIIYTTNGRLGFDYLIDNLADSAEGKFLPQLNYGIIDEVDSIILDAAQTPLVISGAPRLQSNLFHIVKEFVDTLIEDVHFKMKKTKKEIWLLNQGIEAAQSYFNVEDLYSEQAMVLVRNINLALRAQYLFESNVDYFVYNGDIVLIDRITGRMLPGTKLQAGLHQAIEAKEGMEVSTDKSVMATITFQNLFKLFESFSGMTATGKLGESEFFDLYSKIVVQVPTDKAIQRIDEPDKVFRSVDEKNIAMIHDIVELHETGRPVLLITRTAEAAEYFSKVLFQMDIPNNLLIAQNVAKEAQMIAEAGQIGSMTVATSMAGRGTDIKLGEGVEALGGLAVIIHEHMENSRVDRQLRGRSGRQGDPGSSCIYISLDDYLVKRWSDSNLAENNQLYSLDAQRLSQSNLFNRKVKQIVVKAQRISEEQGVKAREMANEFEKSISIQRDLVYEERNRVLEIDDAENQDFKALAKDVFEMFVNEEKVLTKSRVVEYIYQNLSFQFNKDVACVNFKDKQAVVTFLLEQFEKQLALNRKNMQSAYYYNIFVQKVFLKAIDSCWLEQVDYLQQLKASVNQRQNGQRNAIFEYHRVALDSFEVMTRNIKKRMVKNICQSMITFDKEGMPVIHFP.

ATP-binding positions include glutamine 84, 102–106, and aspartate 496; that span reads GEGKT.

This sequence belongs to the SecA family. In terms of assembly, monomer and homodimer. Part of the essential Sec protein translocation apparatus which comprises SecA, SecYEG and auxiliary proteins SecDF. Other proteins may also be involved.

The protein localises to the cell membrane. It localises to the cytoplasm. The enzyme catalyses ATP + H2O + cellular proteinSide 1 = ADP + phosphate + cellular proteinSide 2.. Functionally, part of the Sec protein translocase complex. Interacts with the SecYEG preprotein conducting channel. Has a central role in coupling the hydrolysis of ATP to the transfer of proteins into and across the cell membrane, serving as an ATP-driven molecular motor driving the stepwise translocation of polypeptide chains across the membrane. This chain is Protein translocase subunit SecA 2, found in Staphylococcus aureus (strain MSSA476).